The primary structure comprises 493 residues: Transmembrane and coiled-coil domain-containing protein 6 (493 aa).

The stretch at Gly15 to Glu84 forms a coiled coil. Helical transmembrane passes span Val338–Pro358 and Pro386–Cys406.

The protein resides in the membrane. This chain is Transmembrane and coiled-coil domain-containing protein 6 (TMCO6), found in Homo sapiens (Human).